The primary structure comprises 317 residues: GTPase Era (317 aa).

Positions 23–190 (RSGFVALIGP…MDYLVETLPE (168 aa)) constitute an Era-type G domain. A G1 region spans residues 31-38 (GPTNAGKS). 31-38 (GPTNAGKS) contributes to the GTP binding site. The interval 57-61 (QTTRA) is G2. The tract at residues 78–81 (DTPG) is G3. Residues 78–82 (DTPGI) and 140–143 (NKID) contribute to the GTP site. Positions 140 to 143 (NKID) are G4. The tract at residues 169–171 (ISA) is G5. The 78-residue stretch at 221–298 (LHQELPYASH…HLFLFVKVRE (78 aa)) folds into the KH type-2 domain.

This sequence belongs to the TRAFAC class TrmE-Era-EngA-EngB-Septin-like GTPase superfamily. Era GTPase family. As to quaternary structure, monomer.

The protein localises to the cytoplasm. Its subcellular location is the cell inner membrane. An essential GTPase that binds both GDP and GTP, with rapid nucleotide exchange. Plays a role in 16S rRNA processing and 30S ribosomal subunit biogenesis and possibly also in cell cycle regulation and energy metabolism. The polypeptide is GTPase Era (Agrobacterium fabrum (strain C58 / ATCC 33970) (Agrobacterium tumefaciens (strain C58))).